The primary structure comprises 229 residues: Golgi to ER traffic protein 1 (229 aa).

Residues 1 to 14 lie on the Lumenal side of the membrane; that stretch reads MGILAALDLHPYTL. The chain crosses the membrane as a helical span at residues 15–34; it reads VVSSFTVLLIQQLVGFIGKS. Residues 35–122 are Cytoplasmic-facing; sequence TIQEFAWLFY…KINSLVGVVL (88 aa). Residues 60–117 adopt a coiled-coil conformation; it reads HTKKQEELHKLNREKRSISAQDEYAKWTKLNRQAEKLTAEVKSLSDDIAKDKSKINSL. The chain crosses the membrane as a helical span at residues 123–143; sequence LFLTTLPLWVFRLWFRKSVLF. Residues 144–167 lie on the Lumenal side of the membrane; it reads YLPTGVFPYYVERVLAIPFFASGS. The helical transmembrane segment at 168–184 threads the bilayer; that stretch reads VGLTVWMFAVNNVISSV. Residues 185 to 229 lie on the Cytoplasmic side of the membrane; sequence LFLLTFPFKPSVPIPIRQTKVEEVVPESAESKESSPEVIDIADAN. Positions 210 to 219 are enriched in basic and acidic residues; it reads PESAESKESS. Residues 210–229 form a disordered region; that stretch reads PESAESKESSPEVIDIADAN.

The protein belongs to the WRB/GET1 family. In terms of assembly, component of the Golgi to ER traffic (GET) complex, which is composed of GET1, GET2 and GET3. Within the complex, GET1 and GET2 form a heterotetramer which is stabilized by phosphatidylinositol binding and which binds to the GET3 homodimer.

The protein localises to the endoplasmic reticulum membrane. The protein resides in the golgi apparatus membrane. Required for the post-translational delivery of tail-anchored (TA) proteins to the endoplasmic reticulum. Together with GET2, acts as a membrane receptor for soluble GET3, which recognizes and selectively binds the transmembrane domain of TA proteins in the cytosol. The GET complex cooperates with the HDEL receptor ERD2 to mediate the ATP-dependent retrieval of resident ER proteins that contain a C-terminal H-D-E-L retention signal from the Golgi to the ER. The chain is Golgi to ER traffic protein 1 from Scheffersomyces stipitis (strain ATCC 58785 / CBS 6054 / NBRC 10063 / NRRL Y-11545) (Yeast).